A 692-amino-acid polypeptide reads, in one-letter code: Glycine--tRNA ligase beta subunit (692 aa).

The protein belongs to the class-II aminoacyl-tRNA synthetase family. Tetramer of two alpha and two beta subunits.

It is found in the cytoplasm. It catalyses the reaction tRNA(Gly) + glycine + ATP = glycyl-tRNA(Gly) + AMP + diphosphate. The polypeptide is Glycine--tRNA ligase beta subunit (Hahella chejuensis (strain KCTC 2396)).